The sequence spans 248 residues: 4-hydroxy-tetrahydrodipicolinate reductase (248 aa).

NAD(+) is bound by residues 74–76 and 99–102; these read GTT and SANF. Catalysis depends on His134, which acts as the Proton donor/acceptor. His135 contacts (S)-2,3,4,5-tetrahydrodipicolinate. The active-site Proton donor is the Lys138. Position 144–145 (144–145) interacts with (S)-2,3,4,5-tetrahydrodipicolinate; that stretch reads GT.

The protein belongs to the DapB family.

Its subcellular location is the cytoplasm. It catalyses the reaction (S)-2,3,4,5-tetrahydrodipicolinate + NAD(+) + H2O = (2S,4S)-4-hydroxy-2,3,4,5-tetrahydrodipicolinate + NADH + H(+). The enzyme catalyses (S)-2,3,4,5-tetrahydrodipicolinate + NADP(+) + H2O = (2S,4S)-4-hydroxy-2,3,4,5-tetrahydrodipicolinate + NADPH + H(+). Its pathway is amino-acid biosynthesis; L-lysine biosynthesis via DAP pathway; (S)-tetrahydrodipicolinate from L-aspartate: step 4/4. Its function is as follows. Catalyzes the conversion of 4-hydroxy-tetrahydrodipicolinate (HTPA) to tetrahydrodipicolinate. This is 4-hydroxy-tetrahydrodipicolinate reductase from Chlorobium phaeobacteroides (strain BS1).